A 282-amino-acid chain; its full sequence is 4-diphosphocytidyl-2-C-methyl-D-erythritol kinase (282 aa).

The active site involves K9. 98-108 (PMGGGLGGGSS) provides a ligand contact to ATP. D140 is an active-site residue.

This sequence belongs to the GHMP kinase family. IspE subfamily. In terms of assembly, homodimer.

The enzyme catalyses 4-CDP-2-C-methyl-D-erythritol + ATP = 4-CDP-2-C-methyl-D-erythritol 2-phosphate + ADP + H(+). It functions in the pathway isoprenoid biosynthesis; isopentenyl diphosphate biosynthesis via DXP pathway; isopentenyl diphosphate from 1-deoxy-D-xylulose 5-phosphate: step 3/6. Functionally, catalyzes the phosphorylation of the position 2 hydroxy group of 4-diphosphocytidyl-2C-methyl-D-erythritol. In Salmonella paratyphi B (strain ATCC BAA-1250 / SPB7), this protein is 4-diphosphocytidyl-2-C-methyl-D-erythritol kinase.